The primary structure comprises 609 residues: MIQVLLVTICLAAFPYQGSSIILESGNVNDYEVIYPRKVTALPKGAVQPKYEDAMQYELKVNGEPVVLHLGKNKGLFSKDYSETHYSPDGREITTYPLVEDHCYYHGRIENDADSTASISACNGLKGHFKLQGEMYLIEPLKLPDSEAHAVYKYENVEKEDEALKMCGVTQNWESYEPIKKASQLVVTAEHQKYNPFRFVELFLVVDKAMVTKNNGDLDKIKTRMYEIVNTVNEIYRYMYIHVALVGLEIWSNEDKITVKPEAGYTLNAFGEWRKTDLLTRKKHDNAQLLTAIDLDRVIGLAYVGSMCHPKRSTGIIQDYSEINLVVAVIMAHEMGHNLGINHDSGYCSCGDYACIMRPEISPEPSTFFSNCSYFECWDFIMNHNPECILNEPLGTDIISPPVCGNELLEVGEECDCGTPENCQNECCDAATCKLKSGSQCGHGDCCEQCKFSKSGTECRASMSECDPAEHCTGQSSECPADVFHKNGQPCLDNYGYCYNGNCPIMYHQCYDLFGADVYEAEDSCFERNQKGNYYGYCRKENGNKIPCAPEDVKCGRLYCKDNSPGQNNPCKMFYSNEDEHKGMVLPGTKCADGKVCSNGHCVDVATAY.

An N-terminal signal peptide occupies residues 1–20; it reads MIQVLLVTICLAAFPYQGSS. A propeptide spanning residues 21 to 189 is cleaved from the precursor; it reads IILESGNVND…KKASQLVVTA (169 aa). Glu190 is modified (pyrrolidone carboxylic acid (Glu)). The Peptidase M12B domain occupies 198–393; the sequence is RFVELFLVVD…HNPECILNEP (196 aa). The Ca(2+) site is built by Glu201 and Asp285. 3 disulfides stabilise this stretch: Cys308–Cys388, Cys348–Cys372, and Cys350–Cys355. His333 serves as a coordination point for Zn(2+). The active site involves Glu334. Residues His337 and His343 each coordinate Zn(2+). Asn371 is a glycosylation site (N-linked (GlcNAc...) asparagine). Ca(2+)-binding residues include Cys388, Asn391, Val403, Asn406, Leu408, Glu410, Glu413, and Asp416. Positions 401-487 constitute a Disintegrin domain; it reads PPVCGNELLE…ECPADVFHKN (87 aa). Cystine bridges form between Cys404–Cys423, Cys404–Cys433, Cys415–Cys428, Cys415–Cys433, Cys417–Cys423, Cys427–Cys450, Cys441–Cys447, Cys446–Cys472, Cys459–Cys479, Cys466–Cys491, Cys466–Cys498, Cys491–Cys503, Cys498–Cys503, Cys510–Cys525, Cys510–Cys560, Cys525–Cys571, Cys538–Cys548, Cys548–Cys555, Cys555–Cys597, Cys560–Cys571, Cys591–Cys602, and Cys597–Cys602. Residues 459 to 472 form an inhibits platelet aggregation region; that stretch reads CRASMSECDPAEHC. The D/ECD-tripeptide motif lies at 465–467; the sequence is ECD. Ca(2+)-binding residues include Asp467, Pro468, Glu470, Asp482, and Val483.

Belongs to the venom metalloproteinase (M12B) family. P-III subfamily. P-IIIb sub-subfamily. As to quaternary structure, monomer or heterodimer; non-covalently linked. Interacts with fibrillar collagen. The cofactor is Zn(2+). Post-translationally, the N-terminus is blocked. As to expression, expressed by the venom gland.

It localises to the secreted. Functionally, zinc metalloprotease that abolishes platelet aggregation induced by collagen, but has no effect on platelet aggregation induced by ADP or thromboxane analog. This inhibition may be due to its ability to bind collagen and block the binding site on collagen for platelets and/or to its ability to bind to the platelet alpha-2/beta-1 collagen receptor (ITGA2/ITGB1) to block its interaction with collagen and hence prevent platelet stimulation. In terms of biological role, abolishes platelet aggregation induced by collagen (IC(50)=66 nM) but not ADP-stimulated platelet aggregation. This inhibition may be due to its ability to bind collagen and block the binding site on collagen for platelets and/or to its ability to bind to the platelet alpha-2/beta-1 collagen receptor (ITGA2/ITGB1) to block its interaction with collagen and hence prevent platelet stimulation. This is Zinc metalloproteinase-disintegrin-like VAP2B from Crotalus atrox (Western diamondback rattlesnake).